We begin with the raw amino-acid sequence, 268 residues long: Indole-3-glycerol phosphate synthase (268 aa).

This sequence belongs to the TrpC family.

The catalysed reaction is 1-(2-carboxyphenylamino)-1-deoxy-D-ribulose 5-phosphate + H(+) = (1S,2R)-1-C-(indol-3-yl)glycerol 3-phosphate + CO2 + H2O. It participates in amino-acid biosynthesis; L-tryptophan biosynthesis; L-tryptophan from chorismate: step 4/5. The sequence is that of Indole-3-glycerol phosphate synthase from Lachnospira eligens (strain ATCC 27750 / DSM 3376 / VPI C15-48 / C15-B4) (Eubacterium eligens).